The sequence spans 418 residues: UPF0754 membrane protein alr5253 (418 aa).

Transmembrane regions (helical) follow at residues 10-30 (WSHLWLYVSPPILGGIIGYFT) and 394-414 (IVSLGGILGLIVGLFQTAFFI).

The protein belongs to the UPF0754 family.

The protein resides in the cell inner membrane. This Nostoc sp. (strain PCC 7120 / SAG 25.82 / UTEX 2576) protein is UPF0754 membrane protein alr5253.